We begin with the raw amino-acid sequence, 288 residues long: Chemotaxis protein methyltransferase 2 (288 aa).

The 280-residue stretch at 1–280 (MNEIVITDTD…TGYYKPHKGK (280 aa)) folds into the CheR-type methyltransferase domain. Residues Asn76, Thr78, Arg82, Glu119, Asp145, 200–201 (NL), and 219–220 (RN) each bind S-adenosyl-L-methionine.

It catalyses the reaction L-glutamyl-[protein] + S-adenosyl-L-methionine = [protein]-L-glutamate 5-O-methyl ester + S-adenosyl-L-homocysteine. Its function is as follows. Methylation of the membrane-bound methyl-accepting chemotaxis proteins (MCP) to form gamma-glutamyl methyl ester residues in MCP. The sequence is that of Chemotaxis protein methyltransferase 2 (cheR2) from Vibrio cholerae serotype O1 (strain ATCC 39315 / El Tor Inaba N16961).